The primary structure comprises 777 residues: B3 domain-containing protein REM-like 1 (777 aa).

The segment at residues 97 to 193 is a DNA-binding region (TF-B3 1); the sequence is FVTFTLAPVD…TPVLSLCFEE (97 aa). Disordered regions lie at residues 200–248 and 344–391; these read VGEE…TSPS and KSSS…ESSS. Residues 218–243 are compositionally biased toward basic and acidic residues; it reads KIVKDDNNKDESSTWKREGNHLRCKD. Residues 252–347 constitute a DNA-binding region (TF-B3 2); the sequence is TLTVTITPDS…TPVLSIKSSS (96 aa). The segment covering 344-368 has biased composition (polar residues); it reads KSSSGKGQSEFSKESLSIKPSSGNM. Residues 370-388 show a composition bias toward basic and acidic residues; it reads KKVENNREASRKYPPRSRE. 2 consecutive DNA-binding regions (TF-B3) follow at residues 582–676 and 683–777; these read FLTL…RDSS and FLTL…FYTK.

The protein localises to the nucleus. The polypeptide is B3 domain-containing protein REM-like 1 (Arabidopsis thaliana (Mouse-ear cress)).